The primary structure comprises 62 residues: Photosystem II reaction center protein Z (62 aa).

Transmembrane regions (helical) follow at residues 8–28 and 41–61; these read LIAA…VVFS and WGGA…SIVV.

This sequence belongs to the PsbZ family. As to quaternary structure, PSII is composed of 1 copy each of membrane proteins PsbA, PsbB, PsbC, PsbD, PsbE, PsbF, PsbH, PsbI, PsbJ, PsbK, PsbL, PsbM, PsbT, PsbX, PsbY, PsbZ, Psb30/Ycf12, peripheral proteins PsbO, CyanoQ (PsbQ), PsbU, PsbV and a large number of cofactors. It forms dimeric complexes.

It localises to the cellular thylakoid membrane. May control the interaction of photosystem II (PSII) cores with the light-harvesting antenna, regulates electron flow through the 2 photosystem reaction centers. PSII is a light-driven water plastoquinone oxidoreductase, using light energy to abstract electrons from H(2)O, generating a proton gradient subsequently used for ATP formation. This is Photosystem II reaction center protein Z from Acaryochloris marina (strain MBIC 11017).